Here is a 465-residue protein sequence, read N- to C-terminus: Mothers against decapentaplegic homolog 1 (465 aa).

At M1 the chain carries N-acetylmethionine. The MH1 domain maps to 12-136; the sequence is PAVKRLLGWK…YKRVESPVLP (125 aa). Zn(2+)-binding residues include C64, C109, C121, and H126. Residues 162-248 form a disordered region; sequence NEPHMPLNAT…SQPMDTNMMA (87 aa). A compositionally biased stretch (low complexity) spans 179 to 210; that stretch reads PNSHPFPHSPNSSYPNSPGSSSSTYPHSPTSS. Positions 221-232 are enriched in pro residues; that stretch reads DTPPPAYLPPED. An MH2 domain is found at 271 to 465; sequence WCSIVYYELN…SPHNPISSVS (195 aa). T322 is subject to Phosphothreonine; by MINK1, TNIK and MAP4K4. Residues 418–428 are L3 loop; it reads KGWGAEYHRQD. 2 positions are modified to phosphoserine: S463 and S465.

The protein belongs to the dwarfin/SMAD family. As to quaternary structure, found in a complex with SMAD4 and YY1. Interacts with HGS, NANOG and ZCCHC12. Upon C-terminus phosphorylation: forms trimers with another SMAD1 and the co-SMAD SMAD4. Interacts with PEBP2-alpha subunit, CREB-binding protein (CBP), p300, SMURF1, SMURF2, USP15 and HOXC8. Associates with ZNF423 or ZNF521 in response to BMP2 leading to activate transcription of BMP target genes. Interacts with SKOR1. Interacts (via MH2 domain) with LEMD3. Binding to LEMD3 results in at least a partial reduction of receptor-mediated phosphorylation. Forms a ternary complex with PSMB4 and OAZ1 before PSMB4 is incorporated into the 20S proteasome. Interacts (via MH2 domain) with FAM83G (via MH2 domain); in a SMAD4-independent manner. Interacts with ZC3H3. Interacts with TMEM119. Interacts (via MH1 and MH2 domains) with ZNF8. Interacts with RANBP3L; the interaction increases when SMAD1 is not phosphorylated and mediates SMAD1 nuclear export. Interacts with EGR1; this interaction inhibits SMAD1 dephosphorylation. Interacts with SMAD6. Interacts with YAP1. Interacts with MTMR4; negatively regulates BMP signaling through SMAD1 dephosphorylation and retention in endosomes. Post-translationally, phosphorylation of the C-terminal SVS motif by BMP type 1 receptor kinase activates SMAD1 by promoting dissociation from the receptor and trimerization with SMAD4. Phosphorylation by ERK2 MAP kinase in response to EGF or HGF prevents SMAD1 nuclear accumulation and transcriptional activity in response to BMP. Dephosphorylation, probably by PPM1A, induces its export from the nucleus to the cytoplasm. Dephosphorylation is inhibited by association with EGR1. Phosphorylation by CDK8/9 creates binding sites for YAP1, and subsequent phosphorylation by GSK3 switches off YAP1 binding and adds binding sites for SMURF1. Ubiquitinated by SMAD-specific E3 ubiquitin ligase SMURF1, leading to its degradation. Monoubiquitinated, leading to prevent DNA-binding. Deubiquitination by USP15 alleviates inhibition and promotes activation of TGF-beta target genes. Dephosphorylation, probably by PPM1A, induces its export from the nucleus to the cytoplasm. Phospho-SMAD1 is ubiquitinated by CHIP leading to disruption of the SMAD1-SMAD4 complex. As to expression, ubiquitous. Highest expression seen in the heart and skeletal muscle.

Its subcellular location is the cytoplasm. It localises to the nucleus. In terms of biological role, transcriptional modulator that plays a role in various cellular processes, including embryonic development, cell differentiation, and tissue homeostasis. Upon BMP ligand binding to their receptors at the cell surface, is phosphorylated by activated type I BMP receptors (BMPRIs) and associates with SMAD4 to form a heteromeric complex which translocates into the nucleus acting as transcription factor. In turn, the hetero-trimeric complex recognizes cis-regulatory elements containing Smad Binding Elements (SBEs) to modulate the outcome of the signaling network. SMAD1/OAZ1/PSMB4 complex mediates the degradation of the CREBBP/EP300 repressor SNIP1. Positively regulates BMP4-induced expression of odontogenic development regulator MSX1 following IPO7-mediated nuclear import. The chain is Mothers against decapentaplegic homolog 1 (SMAD1) from Homo sapiens (Human).